A 443-amino-acid chain; its full sequence is MTRWLFMVACLGIACQGAILRENSARNLKNSLKVMHEWKYIDYDFGSEEKRQAAIQSDEYDHTKNYPFDVDQWRDKTFVTVLRYDGVPSSLNVISEKTGNGGRLLQPYPDWSWTKYKDCSGIVSAYSIAIDKFDRLWVLDSGLVNNTQPMCFPKLLVFDLNSSQLIKQVDIPHEIAVNTTTEQGRLKSLAVQAISSVNTLVYIADNKGDGLIVYQNSDDSFHRLTSNTFNYDPRYTKMTVEGESFTVQDGIYGMALSPMTNNLYYSPLASRDLYYVNTKPFIKSEYGENKVQYNGVQDVFNTQTTAKAVSKNGILFFGLVNNTAVGCWNEHQTLQRENTDMVAQNEETLQMIVGMKIKQLLPHIVIIDIDNIINDEYMLVLTNRMQKILNNDLNFNDINFRILIGGVSDLLENTRCTNFNIQNDDSDENNDDSIRITIDASFN.

An N-terminal signal peptide occupies residues 1–17 (MTRWLFMVACLGIACQG). 4 N-linked (GlcNAc...) asparagine glycosylation sites follow: N145, N161, N178, and N321.

Belongs to the major royal jelly protein family. As to expression, found in and secreted from the hypopharyngeal glands of the worker honey bee (at protein level); expression peaks at 12 days post eclosion. Expressed in the brains of adult worker bees peaking at 12 days post eclosion (at protein level). Expressed in the spermatheca of adult queen bees (at protein level); Expression levels are higher in mated queens than in virgin queens.

Its subcellular location is the secreted. Functionally, component of royal jelly, a substance produced in the hypopharyngeal gland containing proteins, free amino acids, fatty acids, sugars and other nutrients, which is fed to developing larvae by worker nurse bees. All larvae are fed some royal jelly (also known as worker jelly) early in their development but it forms the principal source of nutrition for larvae destined to become queen bees. Produced in the spermatheca of adult queen bees, along with other major royal jelly proteins, where it may act as a nutrient supply for sperm stored by mated queens, or be involved in energy metabolism. The polypeptide is Major royal jelly protein 7 (Apis mellifera (Honeybee)).